We begin with the raw amino-acid sequence, 92 residues long: Small ribosomal subunit protein uS19 (92 aa).

It belongs to the universal ribosomal protein uS19 family.

Protein S19 forms a complex with S13 that binds strongly to the 16S ribosomal RNA. The sequence is that of Small ribosomal subunit protein uS19 from Wigglesworthia glossinidia brevipalpis.